The following is a 77-amino-acid chain: NADH-ubiquinone oxidoreductase chain 4L (77 aa).

2 consecutive transmembrane segments (helical) span residues 18-38 (LMFI…LFSG) and 44-64 (MFFY…VVMV).

It belongs to the complex I subunit 4L family.

The protein resides in the mitochondrion membrane. It catalyses the reaction a ubiquinone + NADH + 5 H(+)(in) = a ubiquinol + NAD(+) + 4 H(+)(out). Functionally, core subunit of the mitochondrial membrane respiratory chain NADH dehydrogenase (Complex I) that is believed to belong to the minimal assembly required for catalysis. Complex I functions in the transfer of electrons from NADH to the respiratory chain. The immediate electron acceptor for the enzyme is believed to be ubiquinone. This chain is NADH-ubiquinone oxidoreductase chain 4L (ND4L), found in Ascaris suum (Pig roundworm).